Reading from the N-terminus, the 172-residue chain is MRNLILVGPMGAGKSTIGRLLAKELRLPFKDSDKEIELRTGANIPWIFDKEGEPGFREREQAMIAELCEADGLVLATGGGAVMRGENRQALRAGGRVVYLHASIEQQVGRTARDRNRPLLRTADPARVLSELLAIRDPLYREIADVVIETDERPPRMVVLEILARLAELPPR.

11 to 16 (GAGKST) is a binding site for ATP. Mg(2+) is bound at residue Ser15. Substrate-binding residues include Asp33, Arg57, and Gly79. Arg117 is an ATP binding site. Arg136 contributes to the substrate binding site. Arg153 is a binding site for ATP.

This sequence belongs to the shikimate kinase family. Monomer. It depends on Mg(2+) as a cofactor.

Its subcellular location is the cytoplasm. It catalyses the reaction shikimate + ATP = 3-phosphoshikimate + ADP + H(+). It participates in metabolic intermediate biosynthesis; chorismate biosynthesis; chorismate from D-erythrose 4-phosphate and phosphoenolpyruvate: step 5/7. In terms of biological role, catalyzes the specific phosphorylation of the 3-hydroxyl group of shikimic acid using ATP as a cosubstrate. This Pseudomonas savastanoi pv. phaseolicola (strain 1448A / Race 6) (Pseudomonas syringae pv. phaseolicola (strain 1448A / Race 6)) protein is Shikimate kinase.